The primary structure comprises 143 residues: Small ribosomal subunit protein uS12 (143 aa).

Basic residues predominate over residues 1 to 20 (MGKPRGLRTARKLKNHRREQ). The disordered stretch occupies residues 1 to 28 (MGKPRGLRTARKLKNHRREQRWHDKDYK). Pro62 carries the post-translational modification Hydroxyproline.

This sequence belongs to the universal ribosomal protein uS12 family. As to quaternary structure, component of the 40S small ribosomal subunit.

The protein resides in the cytoplasm. It is found in the cytosol. Its subcellular location is the rough endoplasmic reticulum. This is Small ribosomal subunit protein uS12 (RPS23) from Lumbricus rubellus (Humus earthworm).